The sequence spans 560 residues: Kinesin light chain 1 (560 aa).

The stretch at 31-99 (VIQGLEALKN…MALSNHLNAV (69 aa)) forms a coiled coil. Basic and acidic residues predominate over residues 155 to 176 (KKYDDDISPSEDKDTDSTKEPL). A disordered region spans residues 155-203 (KKYDDDISPSEDKDTDSTKEPLDDLFPNDEDDPGQGIQQQHSSAAAAAQ). Phosphoserine is present on S162. Residues 192–203 (QQQHSSAAAAAQ) are compositionally biased toward low complexity. TPR repeat units lie at residues 213–246 (LRTLHNLVIQYASQGRYEVAVPLCKQALEDLEKT), 255–288 (ATMLNILALVYRDQNKYKDAANLLNDALAIREKT), 297–330 (AATLNNLAVLYGKRGKYKEAEPLCKRALEIREKV), 339–372 (AKQLNNLALLCQNQGKYEEVEYYYQRALEIYQTK), and 381–414 (AKTKNNLASCYLKQGKFKQAETLYKEILTRAHER). At Y449 the chain carries Phosphotyrosine. S460 is modified (phosphoserine). A TPR 6 repeat occupies 464-497 (TTTLKNLGALYRRQGKFEAAETLEEAAMRSRKQG). S521 and S524 each carry phosphoserine; by AMPK.

The protein belongs to the kinesin light chain family. Oligomeric complex composed of two heavy chains and two light chains. Interacts with SPAG9. Interacts with ATCAY; may link mitochondria to KLC1 and regulate mitochondria localization into neuron projections. Interacts (via TPR repeats) with TOR1A; the interaction associates TOR1A with the kinesin oligomeric complex. Interacts with BORCS5. Interacts with MAPK8IP3/JIP3 and NTRK2/TRKB; interaction with NTRK2/TRKB is mediated by MAPK8IP3/JIP3. Interacts with CLSTN1; phosphorylation at Ser-460 inhibits interaction with CLSTN1. In terms of processing, phosphorylation at Ser-460 by ERK inhibits interaction with CLSTN1 and localization to cytoplasmic vesicles.

The protein resides in the cell projection. The protein localises to the growth cone. It is found in the cytoplasmic vesicle. It localises to the cytoplasm. Its subcellular location is the cytoskeleton. In terms of biological role, kinesin is a microtubule-associated force-producing protein that may play a role in organelle transport. The light chain may function in coupling of cargo to the heavy chain or in the modulation of its ATPase activity. The polypeptide is Kinesin light chain 1 (KLC1) (Pongo abelii (Sumatran orangutan)).